The primary structure comprises 631 residues: Chaperone protein DnaK (631 aa).

A Phosphothreonine; by autocatalysis modification is found at T197. The segment at 598 to 631 is disordered; it reads MYKKEQGQTGGTEQGGTEQKKSGGDDDVIDAEVE. Residues 622-631 show a composition bias toward acidic residues; that stretch reads DDDVIDAEVE.

Belongs to the heat shock protein 70 family.

Its function is as follows. Acts as a chaperone. In Nitratiruptor sp. (strain SB155-2), this protein is Chaperone protein DnaK.